The primary structure comprises 1157 residues: Peroxisomal ATPase PEX1 (1157 aa).

2 disordered regions span residues 187 to 221 (SISSVRSDSSGHRIRRVRSSTSTATGRRSVTNNGE) and 1135 to 1157 (SGRDGNMPDGTASNEIGARSTLM). Over residues 205–217 (SSTSTATGRRSVT) the composition is skewed to low complexity.

Belongs to the AAA ATPase family. Interacts with PEX6; forming the PEX1-PEX6 AAA ATPase complex, which is composed of a heterohexamer formed by a trimer of PEX1-PEX6 dimers.

Its subcellular location is the membrane. It carries out the reaction ATP + H2O = ADP + phosphate + H(+). Component of the PEX1-PEX6 AAA ATPase complex involved in peroxisome biosynthesis. The complex acts as a protein dislocase complex that mediates the ATP-dependent extraction of the PEX5 receptor from peroxisomal membranes, an essential step for PEX5 recycling. Specifically recognizes PEX5 monoubiquitinated at 'Cys-6', and pulls it out of the peroxisome lumen through the PEX2-PEX10-PEX12 retrotranslocation channel. Extraction by the PEX1-PEX6 AAA ATPase complex is accompanied by unfolding of the TPR repeats and release of bound cargo from PEX5. In Komagataella pastoris (Yeast), this protein is Peroxisomal ATPase PEX1.